A 239-amino-acid polypeptide reads, in one-letter code: MVKPIIAPSILASDFANLECGCHRVINAGAEWLHIDVMDGHFVPNITLGPPIVKSLRKAVPRVGDKESDKPKAFFDCHMMVAEPEKWVDVFVENGADQFTFHYEATKNPLELVKLIKSRGIRAACAIKPDTPVDVLFELAPYLDMALVMTVEPGFGGQKFMPDMMPKVAALREKFPQLDIQVDGGLGKETIPHAAKAGANVIVAGTSVFAAADQKDVISYMKDNVRDELRSRGLLDIDM.

Ser-9 contributes to the substrate binding site. A divalent metal cation-binding residues include His-34, Asp-36, and His-78. The active-site Proton acceptor is the Asp-36. Substrate is bound by residues His-78, 154–157 (GFGG), 183–185 (DGG), and 205–207 (GTS). A divalent metal cation is bound at residue Asp-183. Asp-183 functions as the Proton donor in the catalytic mechanism.

This sequence belongs to the ribulose-phosphate 3-epimerase family. It depends on Co(2+) as a cofactor. Fe(2+) serves as cofactor. Requires Mn(2+) as cofactor. Zn(2+) is required as a cofactor.

It carries out the reaction D-ribulose 5-phosphate = D-xylulose 5-phosphate. It participates in carbohydrate degradation; pentose phosphate pathway; D-xylulose 5-phosphate from D-ribulose 5-phosphate (non-oxidative stage): step 1/1. Its function is as follows. Catalyzes the reversible epimerization of D-ribulose 5-phosphate to D-xylulose 5-phosphate. This Eremothecium gossypii (strain ATCC 10895 / CBS 109.51 / FGSC 9923 / NRRL Y-1056) (Yeast) protein is Ribulose-phosphate 3-epimerase (RPE1).